We begin with the raw amino-acid sequence, 245 residues long: Derlin-1 (245 aa).

Residues 1–5 lie on the Cytoplasmic side of the membrane; it reads MDLEN. The chain crosses the membrane as a helical span at residues 6 to 26; the sequence is FLLGIPIVTRYWFLASTIIPL. The Lumenal portion of the chain corresponds to 27–57; it reads LGRFGFINVQWMFLQWDLVVNKFQFWRPLTA. Residues 58–78 traverse the membrane as a helical segment; that stretch reads LIYYPVTPQTGFHWLMMCYFL. The Cytoplasmic portion of the chain corresponds to 79–100; it reads YNYSKALESETYRGRSADYLFM. The chain crosses the membrane as a helical span at residues 101–121; it reads LIFNWFFCSGLCMALDIYFLL. The Lumenal segment spans residues 122–166; sequence EPMVISVLYVWCQVNKDTIVSFWFGMRFPARYLPWVLWGFNAVLR. The chain crosses the membrane as a helical span at residues 167–187; sequence GGGTNELVGILVGHAYFFVAL. Topologically, residues 188–245 are cytoplasmic; the sequence is KYPDEYGVDLISTPEFLHRLIPDEDGGIHGQDGNIRGARQQPRGHQWPGGVGARLGGN. Residues 218–245 form a disordered region; the sequence is QDGNIRGARQQPRGHQWPGGVGARLGGN. Residues 234–245 show a composition bias toward gly residues; sequence WPGGVGARLGGN.

The protein belongs to the derlin family.

It is found in the endoplasmic reticulum membrane. In terms of biological role, specifically required for the degradation process of misfolded endoplasmic reticulum (ER) luminal proteins. Participates in the transfer of misfolded proteins from the ER to the cytosol, where they are destroyed by the proteasome in a ubiquitin-dependent manner. This is Derlin-1 from Caenorhabditis elegans.